Here is a 289-residue protein sequence, read N- to C-terminus: UPF0276 protein BPP1075 (289 aa).

It belongs to the UPF0276 family.

This chain is UPF0276 protein BPP1075, found in Bordetella parapertussis (strain 12822 / ATCC BAA-587 / NCTC 13253).